Here is an 869-residue protein sequence, read N- to C-terminus: DNA mismatch repair protein MutS (869 aa).

602 to 609 (GPNMSGKS) lines the ATP pocket.

Belongs to the DNA mismatch repair MutS family.

Its function is as follows. This protein is involved in the repair of mismatches in DNA. It is possible that it carries out the mismatch recognition step. This protein has a weak ATPase activity. The sequence is that of DNA mismatch repair protein MutS from Staphylococcus carnosus (strain TM300).